Consider the following 176-residue polypeptide: Large ribosomal subunit protein bL19 (176 aa).

It belongs to the bacterial ribosomal protein bL19 family.

This protein is located at the 30S-50S ribosomal subunit interface and may play a role in the structure and function of the aminoacyl-tRNA binding site. The protein is Large ribosomal subunit protein bL19 of Sinorhizobium fredii (strain NBRC 101917 / NGR234).